The following is a 136-amino-acid chain: Large ribosomal subunit protein bL21 (136 aa).

Positions Met1 to Ser21 are enriched in low complexity. Positions Met1–Gly25 are disordered.

The protein belongs to the bacterial ribosomal protein bL21 family. Part of the 50S ribosomal subunit. Contacts protein L20.

Functionally, this protein binds to 23S rRNA in the presence of protein L20. This Synechococcus sp. (strain RCC307) protein is Large ribosomal subunit protein bL21.